A 234-amino-acid polypeptide reads, in one-letter code: uncharacterized protein (234 aa).

Helical transmembrane passes span 28–48 (IVII…SIIS), 67–87 (FQIF…FDPI), 123–143 (GGVD…SGTI), and 154–174 (LYCI…GLLY).

Belongs to the complex I subunit 2 family.

The protein resides in the mitochondrion membrane. This is an uncharacterized protein from Neurospora crassa (strain ATCC 24698 / 74-OR23-1A / CBS 708.71 / DSM 1257 / FGSC 987).